A 362-amino-acid chain; its full sequence is Abnormal cell migration protein 13 (362 aa).

The first 20 residues, 1-20 (MTKLLIALILFSICWKPYSA), serve as a signal peptide directing secretion. The Extracellular portion of the chain corresponds to 21–237 (EPIASFFDGL…ELDPLTTVSG (217 aa)). Intrachain disulfides connect cysteine 36–cysteine 68 and cysteine 98–cysteine 136. Residues 36–175 (CKARLDRRLT…KGFKLHWGSF (140 aa)) enclose the CUB domain. The N-linked (GlcNAc...) asparagine glycan is linked to asparagine 63. N-linked (GlcNAc...) asparagine glycosylation is found at asparagine 145 and asparagine 161. One can recognise an LDL-receptor class A domain in the interval 182-225 (NCVTGEFSCGNGECIPIESACDRFADCSNGEDLIHSRQMAANCQ). Cystine bridges form between cysteine 183-cysteine 195, cysteine 190-cysteine 208, and cysteine 202-cysteine 224. Residues 238–258 (VFVLLFSATIILSLCGFIMFV) form a helical membrane-spanning segment. At 259-362 (CCLCKCLKST…VRNDVHRNLL (104 aa)) the chain is on the cytoplasmic side. Positions 275–311 (SSHTTTTTATDYKPDPPQFYPPSPPKMPPPSAASSYT) are disordered. The span at 289 to 305 (DPPQFYPPSPPKMPPPS) shows a compositional bias: pro residues.

Interacts with abl-1 (via SH2 and SH3 domains); the interaction is direct. Interacts with sem-5; the interaction is direct. Expressed in pharyngeal-intestinal valve cells and ventral cord neurons.

The protein localises to the cell membrane. Its subcellular location is the perikaryon. The protein resides in the cell projection. It is found in the axon. It localises to the dendrite. Probable receptor that acts as an upstream signaling protein to promote the guidance, migration and positioning of the right Q neuroblast (QR) and its descendants along the anteroposterior body axis, and also the anterior migration of BDU interneurons during larval development. Associates with and recruits the downstream components tyrosine kinase abl-1 and the tyrosine kinase adapter protein sem-5 to the leading edge of migrating Q neuroblasts and their descendants to activate signaling through the two parallel wve-1 and wsp-1 pathways, respectively, and direct migration along the anteroposterior body axis. Involved in cytoskeleton dynamics regulating the organization of the actin cytoskeleton at the leading edge of migrating cells to ensure correct Q cell polarity and promote migration. Role in cytoskeleton organization may be by activation of the wve-1 and wsp-1 pathways which recruit the Arp2/3 complex to the leading edge of migrating cells. Plays a role in regulating the asymmetric distribution of the actin cytoskeleton-binding protein cor-1 in Q neuroblasts which is required for the anterior migration of QR neuroblasts. In Caenorhabditis elegans, this protein is Abnormal cell migration protein 13.